A 394-amino-acid polypeptide reads, in one-letter code: MAKAKFERTKPHVNVGTIGHVDHGKTTLTAAISHVLAKTYGGEAKDFSQIDNAPEERERGITINTSHIEYDTPTRHYAHVDCPGHADYVKNMITGAAQMDGAILVVAATDGPMPQTREHILLSRQVGVPFIIVFMNKCDMVDDEELLELVEMEVRELLSEYDFPGDDLPVIQGSALKALEGDAAWEGKIIELAEALDSYIPEPERAIDKAFLMPIEDVFSISGRGTVVTGRVERGIIKVGEEVEIVGIKDTTKTTCTGVEMFRKLLDEGRAGENCGILLRGTKRDEVERGQVLSKPGTIKPHTKFESEVYVLSKEEGGRHTPFFKGYRPQFYFRTTDVTGTIELPEGVEMVMPGDNIKMVVTLICPIAMDEGLRFAIREGGRTVGAGVVAKIHE.

The tr-type G domain maps to 10-204 (KPHVNVGTIG…ALDSYIPEPE (195 aa)). The G1 stretch occupies residues 19–26 (GHVDHGKT). 19–26 (GHVDHGKT) lines the GTP pocket. A Mg(2+)-binding site is contributed by T26. Residues 60–64 (GITIN) are G2. The tract at residues 81–84 (DCPG) is G3. GTP is bound by residues 81–85 (DCPGH) and 136–139 (NKCD). The G4 stretch occupies residues 136 to 139 (NKCD). The tract at residues 174 to 176 (SAL) is G5.

Belongs to the TRAFAC class translation factor GTPase superfamily. Classic translation factor GTPase family. EF-Tu/EF-1A subfamily. Monomer.

The protein localises to the cytoplasm. It carries out the reaction GTP + H2O = GDP + phosphate + H(+). In terms of biological role, GTP hydrolase that promotes the GTP-dependent binding of aminoacyl-tRNA to the A-site of ribosomes during protein biosynthesis. This chain is Elongation factor Tu, found in Shewanella amazonensis (strain ATCC BAA-1098 / SB2B).